Here is an 859-residue protein sequence, read N- to C-terminus: Cation/H(+) antiporter 24 (859 aa).

The next 12 helical transmembrane spans lie at 64–84, 92–112, 122–142, 161–181, 194–214, 227–247, 258–278, 291–311, 312–332, 348–368, 384–404, and 438–458; these read AFST…VVSI, PRIV…FGGI, PIAN…FLFL, YIAA…GMAM, SIGG…YTVL, FAMS…VIFE, YSVF…LLVV, EGTL…LASC, FLTD…GLLV, TFIY…GTNI, FYMT…AALF, and IVGF…TAVT. The disordered stretch occupies residues 538–566; it reads IDHEQRKEEEEEEYEEEEEEPERKQSGRI. Residues 546-557 show a composition bias toward acidic residues; the sequence is EEEEEYEEEEEE. A Phosphoserine modification is found at Ser-857.

This sequence belongs to the monovalent cation:proton antiporter 2 (CPA2) transporter (TC 2.A.37) family. CHX (TC 2.A.37.4) subfamily. Specifically expressed in pollen.

The protein resides in the membrane. Functionally, may operate as a cation/H(+) antiporter. The protein is Cation/H(+) antiporter 24 (CHX24) of Arabidopsis thaliana (Mouse-ear cress).